The primary structure comprises 973 residues: Vacuolar membrane protease (973 aa).

Residues 1-15 are Cytoplasmic-facing; it reads MARQYSRTNPLGFTP. Residues 16 to 36 form a helical membrane-spanning segment; sequence WPVTIITALVYLALVIPLLVV. The Vacuolar segment spans residues 37-383; that stretch reads QHVVPSAPGS…STLAVFELHT (347 aa). Residues Asn52 and Asn115 are each glycosylated (N-linked (GlcNAc...) asparagine). Zn(2+) contacts are provided by His167 and Asp179. Glu213 serves as the catalytic Proton acceptor. Residues Glu214, Glu239, and His312 each coordinate Zn(2+). A helical membrane pass occupies residues 384–404; that stretch reads LFALSVTLLIVAPLVLLATSI. The Cytoplasmic segment spans residues 405 to 438; that stretch reads ALVRADRMYLFRSTARVPGSDDFDEGVSLQGVRG. The chain crosses the membrane as a helical span at residues 439–459; it reads FFRFPFLLVIPTGVAVGLAYL. At 460–469 the chain is on the vacuolar side; it reads VTKINPYIIH. A helical membrane pass occupies residues 470–490; sequence SSEYAVWSMMISAWVFLAWFV. Over 491–504 the chain is Cytoplasmic; the sequence is SRVADFARPSAFHR. A helical membrane pass occupies residues 505–525; it reads VYVLTWMFVAEWVLLVIATVY. At 526 to 529 the chain is on the vacuolar side; the sequence is ENRY. The chain crosses the membrane as a helical span at residues 530–550; it reads GLAGGYFVFFALSGTFLATWI. The Cytoplasmic portion of the chain corresponds to 551-674; that stretch reads SYLELFALPR…GLPKWTWVLQ (124 aa). The interval 572–623 is disordered; the sequence is SRYASNHGSRLGTSSGEHGMDDAEDEEDDDGDDEDEARNVEEEPTESTSLLR. A compositionally biased stretch (polar residues) spans 574 to 587; the sequence is YASNHGSRLGTSSG. Acidic residues predominate over residues 593 to 607; it reads DAEDEEDDDGDDEDE. A helical transmembrane segment spans residues 675-695; the sequence is FLLSAPIVLILVGPLALLLTA. Residues 696–708 are Vacuolar-facing; the sequence is ALRQTAQDGSSPL. Residues 709–729 form a helical membrane-spanning segment; that stretch reads FVYIAIAVLTTLLVTPLLPFI. Topologically, residues 730-735 are cytoplasmic; the sequence is HRYTHH. Residues 736–756 form a helical membrane-spanning segment; that stretch reads IPLFLLLVFTGTLIYNLVAFP. At 757-973 the chain is on the vacuolar side; that stretch reads FSPSNRLKLF…LVEGSRRFEV (217 aa). Residues Asn803 and Asn839 are each glycosylated (N-linked (GlcNAc...) asparagine).

It belongs to the peptidase M28 family. Zn(2+) is required as a cofactor.

Its subcellular location is the vacuole membrane. Its function is as follows. May be involved in vacuolar sorting and osmoregulation. The polypeptide is Vacuolar membrane protease (Aspergillus clavatus (strain ATCC 1007 / CBS 513.65 / DSM 816 / NCTC 3887 / NRRL 1 / QM 1276 / 107)).